Consider the following 305-residue polypeptide: Acetylglutamate kinase (305 aa).

Residues 80-81, Arg102, and Asn196 each bind substrate; that span reads GG.

This sequence belongs to the acetylglutamate kinase family. ArgB subfamily.

The protein resides in the cytoplasm. It carries out the reaction N-acetyl-L-glutamate + ATP = N-acetyl-L-glutamyl 5-phosphate + ADP. It functions in the pathway amino-acid biosynthesis; L-arginine biosynthesis; N(2)-acetyl-L-ornithine from L-glutamate: step 2/4. In terms of biological role, catalyzes the ATP-dependent phosphorylation of N-acetyl-L-glutamate. The protein is Acetylglutamate kinase of Chlorobium luteolum (strain DSM 273 / BCRC 81028 / 2530) (Pelodictyon luteolum).